A 729-amino-acid polypeptide reads, in one-letter code: Catalase-peroxidase (729 aa).

Residues 1–24 (MDAKTNDGKAGQCPFTSGRGHKNR) form a disordered region. The tryptophyl-tyrosyl-methioninium (Trp-Tyr) (with M-243) cross-link spans 95–217 (WHSAGTYRIT…LAAVQMGLIY (123 aa)). Catalysis depends on histidine 96, which acts as the Proton acceptor. The tryptophyl-tyrosyl-methioninium (Tyr-Met) (with W-95) cross-link spans 217-243 (YVNPEGPNGQPDPLAAAKDIRETFLRM). Histidine 258 is a heme b binding site.

It belongs to the peroxidase family. Peroxidase/catalase subfamily. As to quaternary structure, homodimer or homotetramer. Heme b serves as cofactor. Post-translationally, formation of the three residue Trp-Tyr-Met cross-link is important for the catalase, but not the peroxidase activity of the enzyme.

The enzyme catalyses H2O2 + AH2 = A + 2 H2O. It catalyses the reaction 2 H2O2 = O2 + 2 H2O. Its function is as follows. Bifunctional enzyme with both catalase and broad-spectrum peroxidase activity. This Nitrobacter winogradskyi (strain ATCC 25391 / DSM 10237 / CIP 104748 / NCIMB 11846 / Nb-255) protein is Catalase-peroxidase.